The primary structure comprises 206 residues: Ribosomal RNA large subunit methyltransferase E (206 aa).

Residues Gly-55, Trp-57, Asp-75, Asp-91, and Asp-116 each contribute to the S-adenosyl-L-methionine site. Lys-156 acts as the Proton acceptor in catalysis.

It belongs to the class I-like SAM-binding methyltransferase superfamily. RNA methyltransferase RlmE family.

The protein localises to the cytoplasm. It carries out the reaction uridine(2552) in 23S rRNA + S-adenosyl-L-methionine = 2'-O-methyluridine(2552) in 23S rRNA + S-adenosyl-L-homocysteine + H(+). Its function is as follows. Specifically methylates the uridine in position 2552 of 23S rRNA at the 2'-O position of the ribose in the fully assembled 50S ribosomal subunit. In Blochmanniella floridana, this protein is Ribosomal RNA large subunit methyltransferase E.